The primary structure comprises 407 residues: UPF0761 membrane protein AZOSEA40600 (407 aa).

The next 6 membrane-spanning stretches (helical) occupy residues 29–49 (SLAFTTLLAIVPLLTVIIALF), 92–112 (GLTLIGTVLLVLTALMLLMTI), 132–152 (LMVHWFALTLGPLALGGSVLA), 174–194 (FARLVPTVLLGSLFSVLYYAV), 207–227 (GGIAAAIVFVLMQRLFGLFIV), and 239–259 (FAVLPIFLVWLYLSWVVILLG).

This sequence belongs to the UPF0761 family.

The protein resides in the cell inner membrane. This chain is UPF0761 membrane protein AZOSEA40600, found in Aromatoleum aromaticum (strain DSM 19018 / LMG 30748 / EbN1) (Azoarcus sp. (strain EbN1)).